We begin with the raw amino-acid sequence, 236 residues long: Phosphoribosylformylglycinamidine synthase subunit PurQ (236 aa).

One can recognise a Glutamine amidotransferase type-1 domain in the interval 2-234; the sequence is RFAVVTFPGS…LSVGLEVAHS (233 aa). Catalysis depends on cysteine 86, which acts as the Nucleophile. Catalysis depends on residues histidine 203 and glutamate 205.

As to quaternary structure, part of the FGAM synthase complex composed of 1 PurL, 1 PurQ and 2 PurS subunits.

It is found in the cytoplasm. It carries out the reaction N(2)-formyl-N(1)-(5-phospho-beta-D-ribosyl)glycinamide + L-glutamine + ATP + H2O = 2-formamido-N(1)-(5-O-phospho-beta-D-ribosyl)acetamidine + L-glutamate + ADP + phosphate + H(+). It catalyses the reaction L-glutamine + H2O = L-glutamate + NH4(+). Its pathway is purine metabolism; IMP biosynthesis via de novo pathway; 5-amino-1-(5-phospho-D-ribosyl)imidazole from N(2)-formyl-N(1)-(5-phospho-D-ribosyl)glycinamide: step 1/2. In terms of biological role, part of the phosphoribosylformylglycinamidine synthase complex involved in the purines biosynthetic pathway. Catalyzes the ATP-dependent conversion of formylglycinamide ribonucleotide (FGAR) and glutamine to yield formylglycinamidine ribonucleotide (FGAM) and glutamate. The FGAM synthase complex is composed of three subunits. PurQ produces an ammonia molecule by converting glutamine to glutamate. PurL transfers the ammonia molecule to FGAR to form FGAM in an ATP-dependent manner. PurS interacts with PurQ and PurL and is thought to assist in the transfer of the ammonia molecule from PurQ to PurL. This is Phosphoribosylformylglycinamidine synthase subunit PurQ from Thermomicrobium roseum (strain ATCC 27502 / DSM 5159 / P-2).